A 283-amino-acid chain; its full sequence is Protease HtpX (283 aa).

Transmembrane regions (helical) follow at residues 4 to 24 (IALF…ILSV) and 33 to 53 (GGIL…SLFM). His139 is a binding site for Zn(2+). The active site involves Glu140. Position 143 (His143) interacts with Zn(2+). 2 consecutive transmembrane segments (helical) span residues 147–167 (GDMV…IFLS) and 192–212 (FLVS…IAMW). Glu218 is a binding site for Zn(2+).

The protein belongs to the peptidase M48B family. Requires Zn(2+) as cofactor.

The protein localises to the cell inner membrane. This chain is Protease HtpX, found in Glaesserella parasuis serovar 5 (strain SH0165) (Haemophilus parasuis).